Here is a 376-residue protein sequence, read N- to C-terminus: Partitioning defective 6 homolog gamma (376 aa).

A PB1 domain is found at Ala18–Arg98. Residues Arg127 to Asn254 are interaction with PARD3 and CDC42. One can recognise a Pseudo-CRIB domain in the interval Ile134 to Leu151. The PDZ domain maps to Arg158 to Asn251. The disordered stretch occupies residues Pro356–Leu376. Residues Val367–Leu376 show a composition bias toward basic and acidic residues.

The protein belongs to the PAR6 family. As to quaternary structure, interacts with PARD3. Interacts with GTP-bound forms of CDC42, RHOQ/TC10 and RAC1. Interacts with the N-terminal part of PRKCI and PRKCZ. As to expression, widely expressed, with a higher expression in fetal and adult kidney.

The protein localises to the cytoplasm. The protein resides in the cell membrane. Its subcellular location is the cell junction. It localises to the tight junction. Functionally, adapter protein involved in asymmetrical cell division and cell polarization processes. May play a role in the formation of epithelial tight junctions. The PARD6-PARD3 complex links GTP-bound Rho small GTPases to atypical protein kinase C proteins. This Homo sapiens (Human) protein is Partitioning defective 6 homolog gamma (PARD6G).